Consider the following 182-residue polypeptide: MSKQLTAQAPVDPIVLGKMGSSYGIRGWLRVFSSTEDAESIFDYQPWFIQKAGQWQQVQLESWKHHNQDMIIKLKGVDDRDAANLLTNCEIVVDSSQLPQLEEGDYYWKDLMGCQVVTTEGYDLGKVIDMMETGSNDVLVIKANLKDAFGIKERLVPFLDGQVIKKVDLTTRSIEVDWDPGF.

Positions 102-182 (EEGDYYWKDL…SIEVDWDPGF (81 aa)) constitute a PRC barrel domain.

The protein belongs to the RimM family. As to quaternary structure, binds ribosomal protein uS19.

It localises to the cytoplasm. Functionally, an accessory protein needed during the final step in the assembly of 30S ribosomal subunit, possibly for assembly of the head region. Essential for efficient processing of 16S rRNA. May be needed both before and after RbfA during the maturation of 16S rRNA. It has affinity for free ribosomal 30S subunits but not for 70S ribosomes. In Escherichia fergusonii (strain ATCC 35469 / DSM 13698 / CCUG 18766 / IAM 14443 / JCM 21226 / LMG 7866 / NBRC 102419 / NCTC 12128 / CDC 0568-73), this protein is Ribosome maturation factor RimM.